A 1019-amino-acid polypeptide reads, in one-letter code: Macrophage colony-stimulating factor 1 receptor 2 (1019 aa).

A signal peptide spans 1–18; it reads MKSYCLLLSITLSCCCSA. The Extracellular portion of the chain corresponds to 19-576; that stretch reads EDLPDPPSIH…LREHNSAFMS (558 aa). 3 Ig-like C2-type domains span residues 37–109, 106–212, and 224–312; these read QAEA…IHLY, IHLY…LLVA, and QNKA…LIVL. A disulfide bridge connects residues cysteine 52 and cysteine 92. 14 N-linked (GlcNAc...) asparagine glycosylation sites follow: asparagine 96, asparagine 148, asparagine 169, asparagine 249, asparagine 342, asparagine 346, asparagine 355, asparagine 369, asparagine 379, asparagine 408, asparagine 422, asparagine 429, asparagine 433, and asparagine 514. 2 disulfide bridges follow: cysteine 139/cysteine 193 and cysteine 239/cysteine 294. Ig-like C2-type domains are found at residues 383–474 and 487–567; these read STTV…LRIY and TLTC…VFHL. Cysteines 490 and 552 form a disulfide. A helical membrane pass occupies residues 577 to 597; that stretch reads ALIGAGSTAAILFLLLLVVFY. The Cytoplasmic portion of the chain corresponds to 598–1019; it reads KWRQKPKYEI…LSVTNIYQLS (422 aa). Positions 601 to 633 are regulatory juxtamembrane domain; that stretch reads QKPKYEIRWKIIESTEGNHYTFVDPTLLPYNYK. Tyrosine 620 carries the post-translational modification Phosphotyrosine; by autocatalysis. The region spanning 641–963 is the Protein kinase domain; sequence LRLGAVLGSG…MICQLIDRLL (323 aa). ATP contacts are provided by residues 647 to 655 and lysine 674; that span reads LGSGAFGKV. Phosphotyrosine; by autocatalysis occurs at positions 756 and 778. Residue aspartate 827 is the Proton acceptor of the active site. Residues 845–867 form an activation loop region; sequence DFGLARDIQNDDSYIVQGNARLP. Tyrosine 858 and tyrosine 974 each carry phosphotyrosine; by autocatalysis. Positions 970–1001 are disordered; the sequence is NHQSYSNINETKKDDFKGGKSQRRGEEEEQRR. The segment covering 979–1001 has biased composition (basic and acidic residues); sequence ETKKDDFKGGKSQRRGEEEEQRR. Tyrosine 1016 is subject to Phosphotyrosine; by autocatalysis.

Belongs to the protein kinase superfamily. Tyr protein kinase family. CSF-1/PDGF receptor subfamily. In terms of assembly, monomer. Homodimer. Interacts with CSF1. Autophosphorylated in response to CSF1 binding. autophosphorylation, leading to its degradation. In terms of processing, ubiquitinated. Becomes rapidly polyubiquitinated after autophosphorylation, leading to its degradation.

It is found in the cell membrane. It catalyses the reaction L-tyrosyl-[protein] + ATP = O-phospho-L-tyrosyl-[protein] + ADP + H(+). Present in an inactive conformation in the absence of bound ligand. CSF1 binding leads to dimerization and activation by autophosphorylation on tyrosine residues. Tyrosine-protein kinase that acts as a cell-surface receptor for CSF1 and plays an essential role in the regulation of survival, proliferation and differentiation of hematopoietic precursor cells, especially mononuclear phagocytes, such as macrophages and monocytes. Plays an important role in innate immunity and in inflammatory processes. Plays an important role in the regulation of osteoclast proliferation and differentiation, the regulation of bone resorption, and is required for normal bone development. Promotes reorganization of the actin cytoskeleton, regulates formation of membrane ruffles, cell adhesion and cell migration. Activates several signaling pathways in response to ligand binding. The chain is Macrophage colony-stimulating factor 1 receptor 2 (csf1r2) from Takifugu rubripes (Japanese pufferfish).